The chain runs to 369 residues: MHVVLAGGGTAGHIEPALTLAEALRRRDVGVGITLLGSPRGLETRLVPARGFDLALIPAVPLPRRLTPDLLAVPSRLRAAVGEVERILAETGADVLVGFGGYVALPGYLAARRTGLPYVVHEANARPGLANRWGARFTRYVAVADAAIRLPHAVPLGIPLRREIATLDRAARRAEARAYFGLDAEAPTLAVAGGSQGARSINRAVVAALPMLAAAGVQVLHIAGPQQIAEVESAQPKRAPDAPAYVLLPYADRMDLVYAAADLMLCRAGALTCAELAAVGLPAVYVPLPHGNGEQRLNAKPIVEAGGGVLLRDAELRGDAIRRIVLPLVTDRARLAEMAGRAAALGRRDADERLADLVEQAAAARRVVT.

UDP-N-acetyl-alpha-D-glucosamine is bound by residues 10-12 (TAG), Asn124, Arg161, Ser195, and Gln295.

This sequence belongs to the glycosyltransferase 28 family. MurG subfamily.

The protein localises to the cell membrane. The enzyme catalyses di-trans,octa-cis-undecaprenyl diphospho-N-acetyl-alpha-D-muramoyl-L-alanyl-D-glutamyl-meso-2,6-diaminopimeloyl-D-alanyl-D-alanine + UDP-N-acetyl-alpha-D-glucosamine = di-trans,octa-cis-undecaprenyl diphospho-[N-acetyl-alpha-D-glucosaminyl-(1-&gt;4)]-N-acetyl-alpha-D-muramoyl-L-alanyl-D-glutamyl-meso-2,6-diaminopimeloyl-D-alanyl-D-alanine + UDP + H(+). It participates in cell wall biogenesis; peptidoglycan biosynthesis. Its function is as follows. Cell wall formation. Catalyzes the transfer of a GlcNAc subunit on undecaprenyl-pyrophosphoryl-MurNAc-pentapeptide (lipid intermediate I) to form undecaprenyl-pyrophosphoryl-MurNAc-(pentapeptide)GlcNAc (lipid intermediate II). This Acidothermus cellulolyticus (strain ATCC 43068 / DSM 8971 / 11B) protein is UDP-N-acetylglucosamine--N-acetylmuramyl-(pentapeptide) pyrophosphoryl-undecaprenol N-acetylglucosamine transferase.